A 160-amino-acid polypeptide reads, in one-letter code: SsrA-binding protein (160 aa).

Belongs to the SmpB family.

The protein localises to the cytoplasm. Required for rescue of stalled ribosomes mediated by trans-translation. Binds to transfer-messenger RNA (tmRNA), required for stable association of tmRNA with ribosomes. tmRNA and SmpB together mimic tRNA shape, replacing the anticodon stem-loop with SmpB. tmRNA is encoded by the ssrA gene; the 2 termini fold to resemble tRNA(Ala) and it encodes a 'tag peptide', a short internal open reading frame. During trans-translation Ala-aminoacylated tmRNA acts like a tRNA, entering the A-site of stalled ribosomes, displacing the stalled mRNA. The ribosome then switches to translate the ORF on the tmRNA; the nascent peptide is terminated with the 'tag peptide' encoded by the tmRNA and targeted for degradation. The ribosome is freed to recommence translation, which seems to be the essential function of trans-translation. The chain is SsrA-binding protein from Yersinia pseudotuberculosis serotype O:1b (strain IP 31758).